A 262-amino-acid polypeptide reads, in one-letter code: Outer membrane protein assembly factor BamD (262 aa).

A signal peptide spans 1–18 (MRKIKSLALLAVAALVIG). Cysteine 19 carries N-palmitoyl cysteine lipidation. Cysteine 19 carries S-diacylglycerol cysteine lipidation.

The protein belongs to the BamD family. In terms of assembly, part of the Bam complex.

The protein resides in the cell outer membrane. In terms of biological role, part of the outer membrane protein assembly complex, which is involved in assembly and insertion of beta-barrel proteins into the outer membrane. The protein is Outer membrane protein assembly factor BamD of Haemophilus influenzae (strain ATCC 51907 / DSM 11121 / KW20 / Rd).